Here is a 131-residue protein sequence, read N- to C-terminus: Profilin-5 (131 aa).

A disulfide bond links Cys-13 and Cys-115. An Involved in PIP2 interaction motif is present at residues 81-97 (AVIRGKKGAGGITIKKT). Thr-111 carries the post-translational modification Phosphothreonine.

It belongs to the profilin family. As to quaternary structure, occurs in many kinds of cells as a complex with monomeric actin in a 1:1 ratio. In terms of processing, phosphorylated by MAP kinases.

It localises to the cytoplasm. It is found in the cytoskeleton. Its function is as follows. Binds to actin and affects the structure of the cytoskeleton. At high concentrations, profilin prevents the polymerization of actin, whereas it enhances it at low concentrations. The protein is Profilin-5 of Olea europaea (Common olive).